The following is a 216-amino-acid chain: MAADPQSSVLLAFALLCLPWPQEVGAFPAMPLSSLFANAVLRAQHLHQLAADTYKEFERAYIPEGQRYSIQNAQAAFCFSETIPAPTGKDEAQQRSDVELLRFSLLLIQSWLGPVQFLSRVFTNSLVFGTSDRVYEKLKDLEEGIQALMRELEDGSPRAGQILKPTYDKFDTSLRSDDALLKNYGLLSCFKKDLHKAETYLRVMKCRRFVESSCAF.

The signal sequence occupies residues 1–26 (MAADPQSSVLLAFALLCLPWPQEVGA). Zn(2+) is bound at residue His-45. Cys-78 and Cys-189 form a disulfide bridge. At Ser-131 the chain carries Phosphoserine. Residue Glu-198 coordinates Zn(2+). Cys-206 and Cys-214 are disulfide-bonded.

Belongs to the somatotropin/prolactin family.

The protein localises to the secreted. Plays an important role in growth control. Its major role in stimulating body growth is to stimulate the liver and other tissues to secrete IGF1. It stimulates both the differentiation and proliferation of myoblasts. It also stimulates amino acid uptake and protein synthesis in muscle and other tissues. In Ailuropoda melanoleuca (Giant panda), this protein is Somatotropin (GH1).